Reading from the N-terminus, the 186-residue chain is Ribosome-recycling factor (186 aa).

The protein belongs to the RRF family.

It localises to the cytoplasm. Responsible for the release of ribosomes from messenger RNA at the termination of protein biosynthesis. May increase the efficiency of translation by recycling ribosomes from one round of translation to another. The polypeptide is Ribosome-recycling factor (Chlorobium phaeovibrioides (strain DSM 265 / 1930) (Prosthecochloris vibrioformis (strain DSM 265))).